Here is a 325-residue protein sequence, read N- to C-terminus: Urease accessory protein UreD (325 aa).

It belongs to the UreD family. As to quaternary structure, ureD, UreF and UreG form a complex that acts as a GTP-hydrolysis-dependent molecular chaperone, activating the urease apoprotein by helping to assemble the nickel containing metallocenter of UreC. The UreE protein probably delivers the nickel.

The protein resides in the cytoplasm. Required for maturation of urease via the functional incorporation of the urease nickel metallocenter. Functionally, expression of the urease operon increases the likelihood of bacterial survival by contributing to acid resistance in vitro and in vivo in BALB/c mice. Y.enterocolitica enters the body via an oral path and must survive the acidic stomach before being able to colonize the intestinal mucosa. The sequence is that of Urease accessory protein UreD from Yersinia enterocolitica.